We begin with the raw amino-acid sequence, 477 residues long: Glycogen synthase (477 aa).

Residue lysine 15 coordinates ADP-alpha-D-glucose.

Belongs to the glycosyltransferase 1 family. Bacterial/plant glycogen synthase subfamily.

The enzyme catalyses [(1-&gt;4)-alpha-D-glucosyl](n) + ADP-alpha-D-glucose = [(1-&gt;4)-alpha-D-glucosyl](n+1) + ADP + H(+). Its pathway is glycan biosynthesis; glycogen biosynthesis. Its function is as follows. Synthesizes alpha-1,4-glucan chains using ADP-glucose. This chain is Glycogen synthase, found in Shigella flexneri serotype 5b (strain 8401).